The sequence spans 473 residues: UTP--glucose-1-phosphate uridylyltransferase (473 aa).

UTP-binding positions include 89–92, Lys103, Gln166, and Gly195; that span reads LNGG. 91–92 contacts substrate; that stretch reads GG. Substrate is bound by residues His196 and 224–226; that span reads NSD. 2 residues coordinate UTP: Asp226 and Lys364.

It belongs to the UDPGP type 1 family.

Its subcellular location is the cytoplasm. The catalysed reaction is alpha-D-glucose 1-phosphate + UTP + H(+) = UDP-alpha-D-glucose + diphosphate. In terms of biological role, plays a central role as a glucosyl donor in cellular metabolic pathways. This is UTP--glucose-1-phosphate uridylyltransferase from Hordeum vulgare (Barley).